An 883-amino-acid chain; its full sequence is Phosphoenolpyruvate carboxylase (883 aa).

Catalysis depends on residues histidine 138 and lysine 546.

This sequence belongs to the PEPCase type 1 family. Mg(2+) serves as cofactor.

The enzyme catalyses oxaloacetate + phosphate = phosphoenolpyruvate + hydrogencarbonate. Its function is as follows. Forms oxaloacetate, a four-carbon dicarboxylic acid source for the tricarboxylic acid cycle. This Salmonella paratyphi A (strain ATCC 9150 / SARB42) protein is Phosphoenolpyruvate carboxylase.